We begin with the raw amino-acid sequence, 367 residues long: Anthranilate phosphoribosyltransferase (367 aa).

Residues 1-21 (MALSSESSAASAARRPSGGPA) show a composition bias toward low complexity. Residues 1 to 24 (MALSSESSAASAARRPSGGPATSW) form a disordered region. 5-phospho-alpha-D-ribose 1-diphosphate contacts are provided by residues glycine 104, 107-108 (GD), threonine 112, 114-117 (NLST), 132-140 (KHGNRAASS), and glycine 144. Glycine 104 is an anthranilate binding site. A Mg(2+)-binding site is contributed by serine 116. Asparagine 135 is an anthranilate binding site. Arginine 190 contacts anthranilate. Positions 248 and 249 each coordinate Mg(2+).

Belongs to the anthranilate phosphoribosyltransferase family. In terms of assembly, homodimer. The cofactor is Mg(2+).

It catalyses the reaction N-(5-phospho-beta-D-ribosyl)anthranilate + diphosphate = 5-phospho-alpha-D-ribose 1-diphosphate + anthranilate. The protein operates within amino-acid biosynthesis; L-tryptophan biosynthesis; L-tryptophan from chorismate: step 2/5. Functionally, catalyzes the transfer of the phosphoribosyl group of 5-phosphorylribose-1-pyrophosphate (PRPP) to anthranilate to yield N-(5'-phosphoribosyl)-anthranilate (PRA). The sequence is that of Anthranilate phosphoribosyltransferase from Mycolicibacterium paratuberculosis (strain ATCC BAA-968 / K-10) (Mycobacterium paratuberculosis).